A 68-amino-acid polypeptide reads, in one-letter code: Large ribosomal subunit protein uL29 (68 aa).

It belongs to the universal ribosomal protein uL29 family.

In Bradyrhizobium sp. (strain BTAi1 / ATCC BAA-1182), this protein is Large ribosomal subunit protein uL29.